The sequence spans 87 residues: Large ribosomal subunit protein eL31 (87 aa).

It belongs to the eukaryotic ribosomal protein eL31 family.

The polypeptide is Large ribosomal subunit protein eL31 (Methanosphaerula palustris (strain ATCC BAA-1556 / DSM 19958 / E1-9c)).